The following is a 205-amino-acid chain: NADH-ubiquinone oxidoreductase chain 6 (205 aa).

Transmembrane regions (helical) follow at residues 48-68, 86-106, and 150-170; these read FFAMIFPVVHIGAIAVSFLFV, YLPVSGIIGLIFWWEMFFILD, and VWFLVPSLILLVAMIGAIVLT.

Belongs to the complex I subunit 6 family. In terms of assembly, complex I is composed of about 45 different subunits.

Its subcellular location is the mitochondrion membrane. The enzyme catalyses a ubiquinone + NADH + 5 H(+)(in) = a ubiquinol + NAD(+) + 4 H(+)(out). Functionally, core subunit of the mitochondrial membrane respiratory chain NADH dehydrogenase (Complex I) that is believed to belong to the minimal assembly required for catalysis. Complex I functions in the transfer of electrons from NADH to the respiratory chain. The immediate electron acceptor for the enzyme is believed to be ubiquinone. This is NADH-ubiquinone oxidoreductase chain 6 (ND6) from Brassica campestris (Field mustard).